Here is a 67-residue protein sequence, read N- to C-terminus: Large ribosomal subunit protein bL35 (67 aa).

The segment covering 1–16 has biased composition (basic residues); sequence MPKMKTKKSAAKRFRV. The disordered stretch occupies residues 1 to 22; that stretch reads MPKMKTKKSAAKRFRVRPGGTV.

The protein belongs to the bacterial ribosomal protein bL35 family.

The chain is Large ribosomal subunit protein bL35 from Methylibium petroleiphilum (strain ATCC BAA-1232 / LMG 22953 / PM1).